A 248-amino-acid chain; its full sequence is Aspartate/glutamate leucyltransferase (248 aa).

Belongs to the R-transferase family. Bpt subfamily.

The protein resides in the cytoplasm. It carries out the reaction N-terminal L-glutamyl-[protein] + L-leucyl-tRNA(Leu) = N-terminal L-leucyl-L-glutamyl-[protein] + tRNA(Leu) + H(+). It catalyses the reaction N-terminal L-aspartyl-[protein] + L-leucyl-tRNA(Leu) = N-terminal L-leucyl-L-aspartyl-[protein] + tRNA(Leu) + H(+). Its function is as follows. Functions in the N-end rule pathway of protein degradation where it conjugates Leu from its aminoacyl-tRNA to the N-termini of proteins containing an N-terminal aspartate or glutamate. The sequence is that of Aspartate/glutamate leucyltransferase from Methylorubrum extorquens (strain PA1) (Methylobacterium extorquens).